Consider the following 116-residue polypeptide: Large ribosomal subunit protein eL30 (116 aa).

Belongs to the eukaryotic ribosomal protein eL30 family. As to quaternary structure, component of the large ribosomal subunit.

Its subcellular location is the cytoplasm. Its function is as follows. Component of the large ribosomal subunit. The ribosome is a large ribonucleoprotein complex responsible for the synthesis of proteins in the cell. The chain is Large ribosomal subunit protein eL30 (rpl30) from Ictalurus punctatus (Channel catfish).